Here is a 678-residue protein sequence, read N- to C-terminus: Sulfoquinovosidase (678 aa).

4 residues coordinate a 6-sulfo-alpha-D-quinovosyldiacylglycerol: Gln-288, Arg-301, Val-302, and Trp-304. Asp-405 serves as the catalytic Nucleophile. Residue Glu-408 is part of the active site. Asp-472 acts as the Proton donor in catalysis. His-537 serves as a coordination point for a 6-sulfo-alpha-D-quinovosyldiacylglycerol.

The protein belongs to the glycosyl hydrolase 31 family.

The enzyme catalyses a 6-sulfo-alpha-D-quinovosyldiacylglycerol + H2O = 6-sulfo-alpha-D-quinovose + a 1,2-diacyl-sn-glycerol. It catalyses the reaction 3-(6-sulfo-alpha-D-quinovosyl)glycerol + H2O = 6-sulfo-alpha-D-quinovose + glycerol. It functions in the pathway glycolipid metabolism. With respect to regulation, is inactivated in vitro by the mechanism-based inactivator 5-fluoro-beta-L-idopyranosyl fluoride (5FIdoF) that yields a covalent glycosyl-enzyme complex with the active site nucleophile Asp-405. Its function is as follows. Catalyzes the hydrolysis of sulfoquinovosyl diacylglycerides (SQDG) to sulfoquinovose (SQ), which is then degraded by E.coli through the SQ Embden-Meyerhof-Parnas (SQ-EMP) sulfoglycolysis pathway as a source of carbon and sulfur. Therefore, is likely involved in the utilization of the sulfoquinovose headgroup found in ubiquitous plant sulfolipids. Is also able to hydrolyze simple sulfoquinovosides such as sulfoquinovosyl glycerol (SQGro). In vitro, can use the substrate analog para-nitrophenyl alpha-sulfoquinovoside (PNPSQ), but shows no detectable activity toward 4-nitrophenyl alpha-D-glucopyranoside (PNPGlc). Is a retaining glycoside hydrolase, since it forms the alpha anomer of SQ. Also exhibits some alpha-glucosidase activity against alpha-glucosyl fluoride in vitro, although natural substrates, such as alpha-glucobioses are scarcely hydrolyzed. The polypeptide is Sulfoquinovosidase (Escherichia coli (strain K12)).